A 622-amino-acid chain; its full sequence is DNA mismatch repair protein MutL (622 aa).

The protein belongs to the DNA mismatch repair MutL/HexB family.

In terms of biological role, this protein is involved in the repair of mismatches in DNA. It is required for dam-dependent methyl-directed DNA mismatch repair. May act as a 'molecular matchmaker', a protein that promotes the formation of a stable complex between two or more DNA-binding proteins in an ATP-dependent manner without itself being part of a final effector complex. This is DNA mismatch repair protein MutL from Actinobacillus pleuropneumoniae serotype 3 (strain JL03).